The following is a 38-amino-acid chain: uncharacterized protein (38 aa).

A helical membrane pass occupies residues 10 to 32 (FSLLWYFLVGGGKGEVCWRFLGI).

The protein resides in the membrane. This is an uncharacterized protein from Saccharomyces cerevisiae (strain ATCC 204508 / S288c) (Baker's yeast).